The chain runs to 629 residues: Nicotinic receptor-associated protein 1 (629 aa).

2 C2 domains span residues 1-144 and 162-299; these read MNQP…KAHL and RTGS…ELLL. Positions 33, 39, 108, 110, 122, 192, 198, 254, 256, and 274 each coordinate Ca(2+). One can recognise a VWFA domain in the interval 342–561; it reads EFAVAVDFTA…LDPDVVQENL (220 aa). Disordered regions lie at residues 581–600 and 607–629; these read GFQP…PPDY and IGRR…PPMY.

The protein belongs to the copine family. As to quaternary structure, interacts with nicotinic acetylcholine receptor. The cofactor is Ca(2+).

Its subcellular location is the cell membrane. In terms of biological role, exhibits calcium-dependent phospholipid binding properties. May function in membrane trafficking. Regulates synaptic levels of nicotinic acetylcholine receptor subunit lev-1 and unc-38 in the nerve cord. Involved in nicotinic acetylcholine receptor (nAChR)-mediated sensitivity to nicotine and levamisole. Affects directional sperm motility. The sequence is that of Nicotinic receptor-associated protein 1 from Caenorhabditis briggsae.